A 411-amino-acid chain; its full sequence is Dual specificity protein phosphatase Mpk3 (411 aa).

The region spanning aspartate 22–glutamate 149 is the Rhodanese domain. Residues aspartate 184–glutamate 197 show a composition bias toward low complexity. A disordered region spans residues aspartate 184–histidine 209. A Tyrosine-protein phosphatase domain is found at alanine 214–leucine 358. Cysteine 302 (phosphocysteine intermediate) is an active-site residue.

This sequence belongs to the protein-tyrosine phosphatase family. Non-receptor class dual specificity subfamily. In terms of assembly, interacts (via N-terminal region) with phosphorylated rl. Ubiquitous expression in eye and wing imaginal disks. Enriched in ovary.

It localises to the cytoplasm. The catalysed reaction is O-phospho-L-tyrosyl-[protein] + H2O = L-tyrosyl-[protein] + phosphate. The enzyme catalyses O-phospho-L-seryl-[protein] + H2O = L-seryl-[protein] + phosphate. It carries out the reaction O-phospho-L-threonyl-[protein] + H2O = L-threonyl-[protein] + phosphate. With respect to regulation, activity abolished by tyrosine phosphatase inhibitor sodium vanadate. Activated by rl. Negatively regulates the activity of members of the MAP kinase family in response to changes in the cellular environment. Has a specificity for the ERK family. Acts as a negative regulator in a variety of developmental processes including cell differentiation and proliferation controlled by the Ras/ERK pathway. Suppresses the photoreceptor cell differentiation and wing vein formation. Required for proper oogenesis and early embryogenesis. Functions autonomously in a subset of photoreceptor progenitor cells in eye imaginal disks. Also appears to be required in surrounding non-neuronal cells for ommatidial patterning and photoreceptor differentiation. Plays a role in the maintenance of epithelial integrity during tracheal development. This is Dual specificity protein phosphatase Mpk3 (Mkp3) from Drosophila melanogaster (Fruit fly).